The sequence spans 144 residues: D-aminoacyl-tRNA deacylase (144 aa).

Positions 136–137 match the Gly-cisPro motif, important for rejection of L-amino acids motif; the sequence is GP.

Belongs to the DTD family. In terms of assembly, homodimer.

Its subcellular location is the cytoplasm. It catalyses the reaction glycyl-tRNA(Ala) + H2O = tRNA(Ala) + glycine + H(+). It carries out the reaction a D-aminoacyl-tRNA + H2O = a tRNA + a D-alpha-amino acid + H(+). Functionally, an aminoacyl-tRNA editing enzyme that deacylates mischarged D-aminoacyl-tRNAs. Also deacylates mischarged glycyl-tRNA(Ala), protecting cells against glycine mischarging by AlaRS. Acts via tRNA-based rather than protein-based catalysis; rejects L-amino acids rather than detecting D-amino acids in the active site. By recycling D-aminoacyl-tRNA to D-amino acids and free tRNA molecules, this enzyme counteracts the toxicity associated with the formation of D-aminoacyl-tRNA entities in vivo and helps enforce protein L-homochirality. The sequence is that of D-aminoacyl-tRNA deacylase from Corynebacterium glutamicum (strain R).